Consider the following 685-residue polypeptide: Threonine--tRNA ligase (685 aa).

The tract at residues 1–28 is disordered; it reads MTSPAPEHSAAPLRVPAGTTAGTAVREA. A TGS domain is found at 1–65; that stretch reads MTSPAPEHSA…EVDVDVEPVA (65 aa). A catalytic region spans residues 262 to 568; it reads DHRKLGTELD…LTEHYAGAFP (307 aa). Positions 367, 418, and 545 each coordinate Zn(2+).

This sequence belongs to the class-II aminoacyl-tRNA synthetase family. Homodimer. The cofactor is Zn(2+).

Its subcellular location is the cytoplasm. The catalysed reaction is tRNA(Thr) + L-threonine + ATP = L-threonyl-tRNA(Thr) + AMP + diphosphate + H(+). Catalyzes the attachment of threonine to tRNA(Thr) in a two-step reaction: L-threonine is first activated by ATP to form Thr-AMP and then transferred to the acceptor end of tRNA(Thr). Also edits incorrectly charged L-seryl-tRNA(Thr). This is Threonine--tRNA ligase from Rhodococcus erythropolis (strain PR4 / NBRC 100887).